Here is a 253-residue protein sequence, read N- to C-terminus: MTTIDLNCDLGESFGAYKMGNDDEILPFVSSINVACGFHAGDPSVMRQTVEKAMQHNVAIGAHPGFPDLIGFGRRNMNVPASEVYDYVLYQIGALDGFVKAAGGKMHHVKPHGALYNMAATNPEIADAIAKAIYHINPSLLLYGLANSEAFIQAAEKYNITLVQEAFADRTYKQDGTLTSRTEENALIKNEEEAIKQVLQMVKEGYVNSVNGQKVAVQAQTICLHGDGEKAVQFARRIYRTFENNEISICTPK.

This sequence belongs to the LamB/PxpA family. In terms of assembly, forms a complex composed of PxpA, PxpB and PxpC.

The enzyme catalyses 5-oxo-L-proline + ATP + 2 H2O = L-glutamate + ADP + phosphate + H(+). Functionally, catalyzes the cleavage of 5-oxoproline to form L-glutamate coupled to the hydrolysis of ATP to ADP and inorganic phosphate. This chain is 5-oxoprolinase subunit A, found in Bacillus cereus (strain Q1).